The chain runs to 313 residues: Adhesin MafA 2 (313 aa).

The first 14 residues, 1-14 (MKTLLLLIPLVLTA), serve as a signal peptide directing secretion. A lipid anchor (N-palmitoyl cysteine) is attached at cysteine 15. The S-diacylglycerol cysteine moiety is linked to residue cysteine 15. Positions 282 to 297 (GDTTAQNRPDFKQNNG) are enriched in polar residues. Positions 282–313 (GDTTAQNRPDFKQNNGKKPDVGNEVIRRRKGG) are disordered.

Belongs to the MafA family.

Its subcellular location is the cell outer membrane. In Neisseria meningitidis serogroup A / serotype 4A (strain DSM 15465 / Z2491), this protein is Adhesin MafA 2 (mafA2).